The sequence spans 122 residues: Small ribosomal subunit protein uS13 (122 aa).

Positions 96 to 122 (LPVHGQRTKTNARTRKGPARTVAGKKK) are disordered.

The protein belongs to the universal ribosomal protein uS13 family. Part of the 30S ribosomal subunit. Forms a loose heterodimer with protein S19. Forms two bridges to the 50S subunit in the 70S ribosome.

In terms of biological role, located at the top of the head of the 30S subunit, it contacts several helices of the 16S rRNA. In the 70S ribosome it contacts the 23S rRNA (bridge B1a) and protein L5 of the 50S subunit (bridge B1b), connecting the 2 subunits; these bridges are implicated in subunit movement. Contacts the tRNAs in the A and P-sites. This chain is Small ribosomal subunit protein uS13, found in Geotalea daltonii (strain DSM 22248 / JCM 15807 / FRC-32) (Geobacter daltonii).